Consider the following 983-residue polypeptide: MTQTPVDYKQTVRTPKTDFPMRANASTREVEIQRFWEEQGIYGRLAQENPGEIFILHDGPPYANGELHVGHALNKILKDIINRYQLLQGRRVRYVPGWDCHGLPIELKVLQDLSQAERSQLTPLDVRTRARDFAQRTVQSQCASYKRFGVWGDWDHPYLTLQPEYEAAQLGVFGKMALKGYIYRGLKPVHWSPSSQTALAEAELEYPTKDDGSPAHTSRSVYVKFPLISIAAPETATVMAAELLPRLSAFHDREEELIDALLGERDDLPEIAVAIWTTTPWTLPGNLAVALNGELDYALVASDEHGLLIVAAELVERLAGTLATRFETIATFRGRELEGSLLAHPLFRRTSPIVLGDHVTTESGTGAVHTAPGHGSEDFELAQRYNLGVLSPVDDYGRFTREADSDRRENLPVFAGKAVLSDGNQAVIEALSAAGALLKEEAYVHKYPYDWRTKKPTIFRATTQWFASVSDFRPQALSAIAQTEWIPASGENRITAMVAGRNDWCISRQRAWGLPIPAFYCENCANVLLTQESVEAVQAAVRVHGSDIWWQKEASELLPPGIACAHCGGTAFRKEKDIMDVWFDSGSSWAGVLGRRPELHYPADVYLEGSDQHRGWFQSSLLTCVATEGTAPYKTVITHGFTLDEHGRKMSKSLGNVVDPKLVIDGGANQKQHPAYGADVLRLWVASVDYTSDQLVGPSVLAQIAEVYRKIRNTARYLLGSLNDFVPERDLVAFDSLGEVDQYLLHRLSVVHLEVTQAFESYQFSRFFQTIQNFCVADLSNFYLDISKDRLYISAEVSLRRRSCQTVLYRVLESLTRLIAPVLPHLAEDIWQHLPYPRSDASVFEAGWPVDHSQWFQPLTVDRWPGLIVLRDRVNIALEAARNAKRIGSSLEAKIRLHVEDPALTDELARQKDELRYLFIVSQVELLDELPAEVSVEEGAAVIVLDADGQKCERCWNYSVHVGEDAEHPTLCERCVSALAGAF.

Residues 61–71 (PYANGELHVGH) carry the 'HIGH' region motif. L-isoleucyl-5'-AMP is bound at residue E608. The short motif at 649–653 (KMSKS) is the 'KMSKS' region element. An ATP-binding site is contributed by K652. Zn(2+) contacts are provided by C952, C955, C972, and C975.

The protein belongs to the class-I aminoacyl-tRNA synthetase family. IleS type 1 subfamily. As to quaternary structure, monomer. The cofactor is Zn(2+).

It localises to the cytoplasm. The enzyme catalyses tRNA(Ile) + L-isoleucine + ATP = L-isoleucyl-tRNA(Ile) + AMP + diphosphate. Catalyzes the attachment of isoleucine to tRNA(Ile). As IleRS can inadvertently accommodate and process structurally similar amino acids such as valine, to avoid such errors it has two additional distinct tRNA(Ile)-dependent editing activities. One activity is designated as 'pretransfer' editing and involves the hydrolysis of activated Val-AMP. The other activity is designated 'posttransfer' editing and involves deacylation of mischarged Val-tRNA(Ile). In Gloeobacter violaceus (strain ATCC 29082 / PCC 7421), this protein is Isoleucine--tRNA ligase.